The chain runs to 501 residues: Pentatricopeptide repeat-containing protein At4g14190, chloroplastic (501 aa).

The N-terminal 88 residues, 1-88 (MENLTTAQFL…SGSCPLRLLQ (88 aa)), are a transit peptide targeting the chloroplast. 5 PPR repeats span residues 130–160 (SENNYERIIRFLCEEKSMSEAIRAFRSMIDD), 166–200 (SLEIYNSIIHSYADDGKFEEAMFYLNHMKENGLLP), 201–235 (ITETYDGLIEAYGKWKMYDEIVLCLKRMESDGCVR), 236–270 (DHVTYNLLIREFSRGGLLKRMEQMYQSLMSRKMTL), and 271–305 (EPSTLLSMLEAYAEFGLIEKMEETCNKIIRFGISL).

The protein belongs to the PPR family. P subfamily.

The protein resides in the plastid. It is found in the chloroplast. This Arabidopsis thaliana (Mouse-ear cress) protein is Pentatricopeptide repeat-containing protein At4g14190, chloroplastic.